The sequence spans 104 residues: Nucleoid-associated protein DICTH_1981 (104 aa).

A disordered region spans residues 85–104 (KSAEKMGSLADGLPLPPGLF).

The protein belongs to the YbaB/EbfC family. Homodimer.

Its subcellular location is the cytoplasm. It is found in the nucleoid. In terms of biological role, binds to DNA and alters its conformation. May be involved in regulation of gene expression, nucleoid organization and DNA protection. This is Nucleoid-associated protein DICTH_1981 from Dictyoglomus thermophilum (strain ATCC 35947 / DSM 3960 / H-6-12).